A 382-amino-acid polypeptide reads, in one-letter code: Galactokinase (382 aa).

34 to 37 (EHTD) contacts substrate. Residue 124–130 (GAGLSSS) participates in ATP binding. Mg(2+)-binding residues include Ser130 and Glu162. Asp174 functions as the Proton acceptor in the catalytic mechanism. Substrate is bound at residue Tyr223.

It belongs to the GHMP kinase family. GalK subfamily.

It localises to the cytoplasm. It carries out the reaction alpha-D-galactose + ATP = alpha-D-galactose 1-phosphate + ADP + H(+). The protein operates within carbohydrate metabolism; galactose metabolism. In terms of biological role, catalyzes the transfer of the gamma-phosphate of ATP to D-galactose to form alpha-D-galactose-1-phosphate (Gal-1-P). This Salmonella heidelberg (strain SL476) protein is Galactokinase.